The sequence spans 522 residues: Glycogen synthase (522 aa).

The interval 1 to 29 (MISAVLDTQGDHPQQQAGDRAAPSVPVPG) is disordered. ADP-alpha-D-glucose is bound at residue Lys-58.

Belongs to the glycosyltransferase 1 family. Bacterial/plant glycogen synthase subfamily.

It carries out the reaction [(1-&gt;4)-alpha-D-glucosyl](n) + ADP-alpha-D-glucose = [(1-&gt;4)-alpha-D-glucosyl](n+1) + ADP + H(+). It participates in glycan biosynthesis; glycogen biosynthesis. In terms of biological role, synthesizes alpha-1,4-glucan chains using ADP-glucose. In Pseudomonas fluorescens (strain ATCC BAA-477 / NRRL B-23932 / Pf-5), this protein is Glycogen synthase.